A 649-amino-acid chain; its full sequence is DNA mismatch repair protein MutL (649 aa).

Residues 339 to 414 (KKKTKDESVQ…VREEESWQST (76 aa)) form a disordered region. Positions 342 to 360 (TKDESVQEQFHFEHTKPKE) are enriched in basic and acidic residues. Positions 388–402 (PQLWQQPKQEWQPPQ) are enriched in low complexity.

This sequence belongs to the DNA mismatch repair MutL/HexB family.

Its function is as follows. This protein is involved in the repair of mismatches in DNA. It is required for dam-dependent methyl-directed DNA mismatch repair. May act as a 'molecular matchmaker', a protein that promotes the formation of a stable complex between two or more DNA-binding proteins in an ATP-dependent manner without itself being part of a final effector complex. The chain is DNA mismatch repair protein MutL from Bacillus cytotoxicus (strain DSM 22905 / CIP 110041 / 391-98 / NVH 391-98).